Consider the following 74-residue polypeptide: uncharacterized protein (74 aa).

This is an uncharacterized protein from Invertebrate iridescent virus 3 (IIV-3).